Here is a 201-residue protein sequence, read N- to C-terminus: Potassium-transporting ATPase KdpC subunit (201 aa).

Residues 10–30 (VLLVALTAVTGLAYPLAVTGI) traverse the membrane as a helical segment.

The protein belongs to the KdpC family. In terms of assembly, the system is composed of three essential subunits: KdpA, KdpB and KdpC.

It is found in the cell inner membrane. Part of the high-affinity ATP-driven potassium transport (or Kdp) system, which catalyzes the hydrolysis of ATP coupled with the electrogenic transport of potassium into the cytoplasm. This subunit acts as a catalytic chaperone that increases the ATP-binding affinity of the ATP-hydrolyzing subunit KdpB by the formation of a transient KdpB/KdpC/ATP ternary complex. The sequence is that of Potassium-transporting ATPase KdpC subunit from Methylorubrum extorquens (strain PA1) (Methylobacterium extorquens).